Reading from the N-terminus, the 149-residue chain is Protein-export protein SecB (149 aa).

It belongs to the SecB family. As to quaternary structure, homotetramer, a dimer of dimers. One homotetramer interacts with 1 SecA dimer.

The protein localises to the cytoplasm. In terms of biological role, one of the proteins required for the normal export of preproteins out of the cell cytoplasm. It is a molecular chaperone that binds to a subset of precursor proteins, maintaining them in a translocation-competent state. It also specifically binds to its receptor SecA. The protein is Protein-export protein SecB of Hydrogenovibrio crunogenus (strain DSM 25203 / XCL-2) (Thiomicrospira crunogena).